Here is a 917-residue protein sequence, read N- to C-terminus: Isoleucine--tRNA ligase (917 aa).

The short motif at 59–69 (PYANGHIHIGH) is the 'HIGH' region element. L-isoleucyl-5'-AMP is bound at residue E569. The 'KMSKS' region motif lies at 610–614 (KMSKS). An ATP-binding site is contributed by K613. The Zn(2+) site is built by C890, C893, C905, and C908.

This sequence belongs to the class-I aminoacyl-tRNA synthetase family. IleS type 1 subfamily. In terms of assembly, monomer. Requires Zn(2+) as cofactor.

It localises to the cytoplasm. The enzyme catalyses tRNA(Ile) + L-isoleucine + ATP = L-isoleucyl-tRNA(Ile) + AMP + diphosphate. Its function is as follows. Catalyzes the attachment of isoleucine to tRNA(Ile). As IleRS can inadvertently accommodate and process structurally similar amino acids such as valine, to avoid such errors it has two additional distinct tRNA(Ile)-dependent editing activities. One activity is designated as 'pretransfer' editing and involves the hydrolysis of activated Val-AMP. The other activity is designated 'posttransfer' editing and involves deacylation of mischarged Val-tRNA(Ile). This is Isoleucine--tRNA ligase from Campylobacter jejuni subsp. jejuni serotype O:2 (strain ATCC 700819 / NCTC 11168).